The chain runs to 624 residues: Plastin-2 (624 aa).

2 consecutive EF-hand domains span residues Glu-9–Pro-44 and Arg-49–Ser-84. Ca(2+) is bound by residues Asp-22, Asp-24, Asn-26, His-28, Glu-33, Asp-62, Asn-64, Asp-66, Lys-68, and Glu-73. 4 Calponin-homology (CH) domains span residues Glu-118–Leu-234, Leu-262–Pro-373, Thr-392–Thr-501, and Lys-513–Met-621. Actin-binding regions lie at residues Glu-118 to Pro-373 and Thr-392 to Met-621.

Monomer. Expressed by macrophages (at protein level).

The protein localises to the cytoplasm. It is found in the cytoskeleton. Its subcellular location is the cell junction. The protein resides in the cell projection. It localises to the ruffle membrane. Functionally, actin-binding protein. Plays a role in the activation of T-cells. The polypeptide is Plastin-2 (Danio rerio (Zebrafish)).